A 346-amino-acid polypeptide reads, in one-letter code: UDP-3-O-acylglucosamine N-acyltransferase (346 aa).

H240 (proton acceptor) is an active-site residue.

It belongs to the transferase hexapeptide repeat family. LpxD subfamily. As to quaternary structure, homotrimer.

It carries out the reaction a UDP-3-O-[(3R)-3-hydroxyacyl]-alpha-D-glucosamine + a (3R)-hydroxyacyl-[ACP] = a UDP-2-N,3-O-bis[(3R)-3-hydroxyacyl]-alpha-D-glucosamine + holo-[ACP] + H(+). The protein operates within bacterial outer membrane biogenesis; LPS lipid A biosynthesis. Functionally, catalyzes the N-acylation of UDP-3-O-acylglucosamine using 3-hydroxyacyl-ACP as the acyl donor. Is involved in the biosynthesis of lipid A, a phosphorylated glycolipid that anchors the lipopolysaccharide to the outer membrane of the cell. This Bacteroides thetaiotaomicron (strain ATCC 29148 / DSM 2079 / JCM 5827 / CCUG 10774 / NCTC 10582 / VPI-5482 / E50) protein is UDP-3-O-acylglucosamine N-acyltransferase.